A 187-amino-acid polypeptide reads, in one-letter code: BCL2/adenovirus E1B 19 kDa protein-interacting protein 3 (187 aa).

The interval leucine 42 to threonine 86 is disordered. Residues serine 48, serine 60, serine 77, serine 79, serine 85, and serine 88 each carry the phosphoserine modification. The span at arginine 50–arginine 63 shows a compositional bias: low complexity. Over residues asparagine 71–glycine 81 the composition is skewed to basic and acidic residues. The short motif at isoleucine 93–glutamate 118 is the BH3 element. The helical transmembrane segment at valine 157–glycine 177 threads the bilayer.

Belongs to the NIP3 family. In terms of assembly, homodimer. Binds to BCL2. Interacts with BNIP3L and ACAA2. Interacts (via BH3 domain) with SPATA18 (via coiled-coil domains). Interacts with BOK; promotes BOK oligomerization. Interacts with PPTC7; this interaction promotes BNIP3 degradation.

Its subcellular location is the mitochondrion. The protein localises to the mitochondrion outer membrane. Apoptosis-inducing protein that can overcome BCL2 suppression. May play a role in repartitioning calcium between the two major intracellular calcium stores in association with BCL2. Involved in mitochondrial quality control via its interaction with SPATA18/MIEAP: in response to mitochondrial damage, participates in mitochondrial protein catabolic process (also named MALM) leading to the degradation of damaged proteins inside mitochondria. The physical interaction of SPATA18/MIEAP, BNIP3 and BNIP3L/NIX at the mitochondrial outer membrane may play a critical role in the translocation of lysosomal proteins from the cytoplasm to the mitochondrial matrix. The physical interaction of SPATA18/MIEAP, BNIP3 and BNIP3L/NIX at the mitochondrial outer membrane regulates the opening of a pore in the mitochondrial double membrane in order to mediate the translocation of lysosomal proteins from the cytoplasm to the mitochondrial matrix. Plays an important role in the calprotectin (S100A8/A9)-induced cell death pathway. The sequence is that of BCL2/adenovirus E1B 19 kDa protein-interacting protein 3 from Mus musculus (Mouse).